Here is a 509-residue protein sequence, read N- to C-terminus: Maturase K (509 aa).

This sequence belongs to the intron maturase 2 family. MatK subfamily.

The protein resides in the plastid. It localises to the chloroplast. Its function is as follows. Usually encoded in the trnK tRNA gene intron. Probably assists in splicing its own and other chloroplast group II introns. The sequence is that of Maturase K from Vatairea macrocarpa.